Reading from the N-terminus, the 69-residue chain is uncharacterized protein (69 aa).

This is an uncharacterized protein from Treponema pallidum (strain Nichols).